A 438-amino-acid chain; its full sequence is sn-glycerol-3-phosphate-binding periplasmic protein UgpB (438 aa).

The N-terminal stretch at 1–23 (MISLRHTALGLALSLAFTGQALA) is a signal peptide. Sn-glycerol 3-phosphate is bound by residues Tyr-65, Glu-89, Ser-144, Ser-270, Gly-307, Tyr-346, and Arg-397.

Belongs to the bacterial solute-binding protein 1 family. As to quaternary structure, the complex is composed of two ATP-binding proteins (UgpC), two transmembrane proteins (UgpA and UgpE) and a solute-binding protein (UgpB).

It is found in the periplasm. Part of the ABC transporter complex UgpBAEC involved in sn-glycerol-3-phosphate (G3P) import. Binds G3P. The sequence is that of sn-glycerol-3-phosphate-binding periplasmic protein UgpB (ugpB) from Salmonella typhi.